We begin with the raw amino-acid sequence, 576 residues long: Interleukin-1 receptor type 1 (576 aa).

The first 19 residues, 1 to 19, serve as a signal peptide directing secretion; the sequence is MENMKVLLGLICLMVPLLS. At 20-338 the chain is on the extracellular side; the sequence is LEIDVCTEYP…QLIYPVPDFK (319 aa). Disulfide bonds link C25/C107, C46/C99, and C145/C199. Ig-like C2-type domains lie at 25–115, 121–213, and 229–329; these read CTEY…VTVT, PGLC…YPVT, and PVIL…AHVQ. N-linked (GlcNAc...) asparagine glycans are attached at residues N63, N103, N174, N236, N252, N266, and N300. Cysteines 251 and 315 form a disulfide. The helical transmembrane segment at 339–359 threads the bilayer; sequence NYLIGGFIILTATIVCCVCIY. At 360–576 the chain is on the cytoplasmic side; that stretch reads KVFKVDIVLW…LPAATHLPLG (217 aa). Residues 386-541 form the TIR domain; the sequence is KTYDAYILYP…RFWKNLRYQM (156 aa). Residue E473 is part of the active site. A Phosphotyrosine modification is found at Y499. T556 is modified (phosphothreonine; by PKC).

This sequence belongs to the interleukin-1 receptor family. In terms of assembly, the interleukin-1 receptor complex is a heterodimer of IL1R1 and IL1RAP. Interacts with PIK3R1. Interacts with IL1A. Post-translationally, a soluble form (sIL1R1) is probably produced by proteolytic cleavage at the cell surface (shedding). In terms of processing, rapidly phosphorylated on Tyr-499 in response to IL-1, which creates a SH2 binding site for the PI 3-kinase regulatory subunit PIK3R1. Isoform 2 is expressed in various brain tissues.

The protein localises to the membrane. The protein resides in the cell membrane. It is found in the secreted. The enzyme catalyses NAD(+) + H2O = ADP-D-ribose + nicotinamide + H(+). Functionally, receptor for IL1A, IL1B and IL1RN. After binding to interleukin-1 associates with the coreceptor IL1RAP to form the high affinity interleukin-1 receptor complex which mediates interleukin-1-dependent activation of NF-kappa-B, MAPK and other pathways. Signaling involves the recruitment of adapter molecules such as TOLLIP, MYD88, and IRAK1 or IRAK2 via the respective TIR domains of the receptor/coreceptor subunits. Binds ligands with comparable affinity and binding of antagonist IL1RN prevents association with IL1RAP to form a signaling complex. Involved in IL1B-mediated costimulation of IFNG production from T-helper 1 (Th1) cells. In terms of biological role, unable to mediate canonical IL-1 signaling. Cooperates with IL1RAP isoform 3 to mediate IL1B-induced neuronal activity including IL1B-potentiated NMDA-induced calcium influx mediated by Akt kinase activation. The protein is Interleukin-1 receptor type 1 (Il1r1) of Mus musculus (Mouse).